The following is a 403-amino-acid chain: Putative glutamate--cysteine ligase 2 (403 aa).

A disordered region spans residues 370 to 403 (ESAAQRRAPQAARRRIRASSEPLGPMSMWPERLH).

The protein belongs to the glutamate--cysteine ligase type 2 family. YbdK subfamily.

The enzyme catalyses L-cysteine + L-glutamate + ATP = gamma-L-glutamyl-L-cysteine + ADP + phosphate + H(+). In terms of biological role, ATP-dependent carboxylate-amine ligase which exhibits weak glutamate--cysteine ligase activity. This chain is Putative glutamate--cysteine ligase 2, found in Bordetella avium (strain 197N).